The chain runs to 1382 residues: Eukaryotic translation initiation factor 3 subunit A (1382 aa).

Lys-68 bears the N6-acetyllysine mark. A coiled-coil region spans residues 82 to 120; sequence NIKSLEDVVRAYLKMAEEKTEAAKEESQQMVLDIEDLDN. The region spanning 315-498 is the PCI domain; sequence MQRMSTRVLL…RTLSFGSDLN (184 aa). Ser-492 and Ser-584 each carry phosphoserine. Residues 664-835 are interaction with EIF3B; the sequence is LDPDFIMAKQ…REERERAERA (172 aa). Disordered stretches follow at residues 810-844 and 866-1382; these read KEEE…LREY and EERE…TVRR. 3 stretches are compositionally biased toward basic and acidic residues: residues 866–1165, 1177–1328, and 1336–1371; these read EERE…DDSR, GWRE…DPPR, and SRDR…TKNE. Phosphoserine occurs at positions 881, 882, and 895. Repeat 1 spans residues 925 to 934; sequence DEDRSHRRDE. Positions 925–1172 are 25 X 10 AA approximate tandem repeats of [DE]-[DE]-[DE]-R-[SEVGFPILV]-[HPSN]-[RSW]-[RL]-[DRGTIHN]-[EPMANLGDT]; it reads DEDRSHRRDE…DSRPGPWRPL (248 aa). One copy of the 2; truncated repeat lies at 935 to 942; it reads ERPRRLGD. 20 tandem repeats follow at residues 943-952, 953-962, 963-972, 973-982, 983-992, 993-1002, 1003-1012, 1013-1022, 1023-1032, 1033-1042, 1043-1052, 1054-1063, 1064-1073, 1074-1083, 1084-1093, 1094-1103, 1104-1113, 1114-1123, 1124-1133, and 1134-1143. Phosphoserine is present on Ser-949. Phosphoserine is present on Ser-1028. Residues 1144–1152 form a 23; truncated repeat; sequence DDDRLSRRA. The stretch at 1153–1162 is repeat 24; the sequence is DDDRFPRRGD. A 25; approximate repeat occupies 1163-1172; it reads DSRPGPWRPL. 5 positions are modified to phosphoserine: Ser-1188, Ser-1198, Ser-1262, Ser-1336, and Ser-1364.

Interacts with EIF4G1. Component of the eukaryotic translation initiation factor 3 (eIF-3) complex, which is composed of 13 subunits: EIF3A, EIF3B, EIF3C, EIF3D, EIF3E, EIF3F, EIF3G, EIF3H, EIF3I, EIF3J, EIF3K, EIF3L and EIF3M. The eIF-3 complex appears to include 3 stable modules: module A is composed of EIF3A, EIF3B, EIF3G and EIF3I; module B is composed of EIF3F, EIF3H, and EIF3M; and module C is composed of EIF3C, EIF3D, EIF3E, EIF3L and EIF3K. EIF3C of module C binds EIF3B of module A and EIF3H of module B, thereby linking the three modules. EIF3J is a labile subunit that binds to the eIF-3 complex via EIF3B. The eIF-3 complex interacts with RPS6KB1 under conditions of nutrient depletion. Mitogenic stimulation leads to binding and activation of a complex composed of MTOR and RPTOR, leading to phosphorylation and release of RPS6KB1 and binding of EIF4B to eIF-3. Also interacts with KRT7 and PIWIL2. Phosphorylated. Phosphorylation is enhanced upon serum stimulation.

Its subcellular location is the cytoplasm. RNA-binding component of the eukaryotic translation initiation factor 3 (eIF-3) complex, which is required for several steps in the initiation of protein synthesis. The eIF-3 complex associates with the 40S ribosome and facilitates the recruitment of eIF-1, eIF-1A, eIF-2:GTP:methionyl-tRNAi and eIF-5 to form the 43S pre-initiation complex (43S PIC). The eIF-3 complex stimulates mRNA recruitment to the 43S PIC and scanning of the mRNA for AUG recognition. The eIF-3 complex is also required for disassembly and recycling of post-termination ribosomal complexes and subsequently prevents premature joining of the 40S and 60S ribosomal subunits prior to initiation. The eIF-3 complex specifically targets and initiates translation of a subset of mRNAs involved in cell proliferation, including cell cycling, differentiation and apoptosis, and uses different modes of RNA stem-loop binding to exert either translational activation or repression. In terms of biological role, (Microbial infection) Essential for the initiation of translation on type-1 viral ribosomal entry sites (IRESs), like for HCV, PV, EV71 or BEV translation. Its function is as follows. (Microbial infection) In case of FCV infection, plays a role in the ribosomal termination-reinitiation event leading to the translation of VP2. The protein is Eukaryotic translation initiation factor 3 subunit A of Homo sapiens (Human).